Reading from the N-terminus, the 360-residue chain is Phospho-N-acetylmuramoyl-pentapeptide-transferase (360 aa).

Helical transmembrane passes span 26-46 (TILGVLTALGIALMIGPAVIQ), 73-93 (TMGGALILVAIAVSTLLWADL), 98-118 (VWVVLLVTLAFGLIGGVDDAL), 136-156 (LQVLAALAASTFLFATATDPV), 168-188 (WVFPLGLGFIALATLVIVGSS), 199-219 (GLAIMPTVLVATGLAVFAYAS), 235-255 (GVGELVIFCGAIVGAGLGFLW), 263-283 (VFMGDVGALALGAALGVVAVA), 288-308 (IVLFIMGGIFVMETVSVMIQV), and 338-358 (VIVRFWIITVVLVLIGLAMLK).

Belongs to the glycosyltransferase 4 family. MraY subfamily. Mg(2+) is required as a cofactor.

Its subcellular location is the cell inner membrane. The enzyme catalyses UDP-N-acetyl-alpha-D-muramoyl-L-alanyl-gamma-D-glutamyl-meso-2,6-diaminopimeloyl-D-alanyl-D-alanine + di-trans,octa-cis-undecaprenyl phosphate = di-trans,octa-cis-undecaprenyl diphospho-N-acetyl-alpha-D-muramoyl-L-alanyl-D-glutamyl-meso-2,6-diaminopimeloyl-D-alanyl-D-alanine + UMP. Its pathway is cell wall biogenesis; peptidoglycan biosynthesis. Functionally, catalyzes the initial step of the lipid cycle reactions in the biosynthesis of the cell wall peptidoglycan: transfers peptidoglycan precursor phospho-MurNAc-pentapeptide from UDP-MurNAc-pentapeptide onto the lipid carrier undecaprenyl phosphate, yielding undecaprenyl-pyrophosphoryl-MurNAc-pentapeptide, known as lipid I. The polypeptide is Phospho-N-acetylmuramoyl-pentapeptide-transferase (Halorhodospira halophila (strain DSM 244 / SL1) (Ectothiorhodospira halophila (strain DSM 244 / SL1))).